The following is a 104-amino-acid chain: Thioredoxin (104 aa).

The Thioredoxin domain maps to Ala-2–Leu-104. A disulfide bond links Cys-29 and Cys-32.

Belongs to the thioredoxin family.

In terms of biological role, participates in various redox reactions through the reversible oxidation of its active center dithiol to a disulfide and catalyzes dithiol-disulfide exchange reactions. The chain is Thioredoxin (trxA) from Bacillus subtilis (strain 168).